The following is a 242-amino-acid chain: MITFQNVNKHYGDFHVLKQINLQIEKGEVVVIIGPSGSGKSTLLRCINRLESINEGVLTVNGTAINDRKTDINQVRQNIGMVFQHFHLYPHKTVLQNIMLAPVKVLRQSPEQAKETARYYLEKVGIPDKADAYPSQLSGGQQQRVAIARGLAMKPEVMLFDEPTSALDPEMIGEVLDVMKTLAKEGMTMVVVTHEMGFAKEVADRIVFIDEGKILEEAVPAEFYANPKEERARLFLSRILNH.

The 235-residue stretch at 2–236 folds into the ABC transporter domain; that stretch reads ITFQNVNKHY…PKEERARLFL (235 aa). 34–41 serves as a coordination point for ATP; it reads GPSGSGKS.

It belongs to the ABC transporter superfamily. In terms of assembly, the complex is composed of two ATP-binding proteins (GlnQ), two transmembrane proteins (GlnM and GlnP) and a solute-binding protein (GlnH).

It localises to the cell membrane. Part of the ABC transporter complex GlnHMPQ involved in glutamine transport. Probably responsible for energy coupling to the transport system. This chain is Glutamine transport ATP-binding protein GlnQ (glnQ), found in Bacillus subtilis (strain 168).